The primary structure comprises 329 residues: Phosphate acyltransferase (329 aa).

This sequence belongs to the PlsX family. Homodimer. Probably interacts with PlsY.

It is found in the cytoplasm. The enzyme catalyses a fatty acyl-[ACP] + phosphate = an acyl phosphate + holo-[ACP]. It functions in the pathway lipid metabolism; phospholipid metabolism. In terms of biological role, catalyzes the reversible formation of acyl-phosphate (acyl-PO(4)) from acyl-[acyl-carrier-protein] (acyl-ACP). This enzyme utilizes acyl-ACP as fatty acyl donor, but not acyl-CoA. This chain is Phosphate acyltransferase, found in Campylobacter lari (strain RM2100 / D67 / ATCC BAA-1060).